The following is a 182-amino-acid chain: Adenine phosphoribosyltransferase (182 aa).

This sequence belongs to the purine/pyrimidine phosphoribosyltransferase family. In terms of assembly, homodimer.

Its subcellular location is the cytoplasm. It carries out the reaction AMP + diphosphate = 5-phospho-alpha-D-ribose 1-diphosphate + adenine. It functions in the pathway purine metabolism; AMP biosynthesis via salvage pathway; AMP from adenine: step 1/1. Functionally, catalyzes a salvage reaction resulting in the formation of AMP, that is energically less costly than de novo synthesis. The sequence is that of Adenine phosphoribosyltransferase from Koribacter versatilis (strain Ellin345).